Reading from the N-terminus, the 2097-residue chain is 1-phosphatidylinositol 3-phosphate 5-kinase (2097 aa).

The interval Met-1–Ser-44 is disordered. Ala-2 bears the N-acetylalanine mark. 2 positions are modified to phosphoserine; by autocatalysis: Ser-23 and Ser-48. Positions Asn-56–Pro-122 are disordered. The segment covering Glu-66–Ser-81 has biased composition (low complexity). Residue Ser-88 is modified to Phosphoserine. The segment at Asp-158–Leu-218 adopts an FYVE-type zinc-finger fold. Positions 164, 167, 180, 183, 188, 191, 210, and 213 each coordinate Zn(2+). 3 positions are modified to phosphoserine: Ser-299, Ser-307, and Ser-312. The residue at position 318 (Ser-318) is a Phosphoserine; by PKB/AKT1 or PKB/AKT2. Residue Ser-329 is modified to Phosphoserine. The DEP domain occupies His-365 to Gln-440. Residues Thr-442–Glu-459 are compositionally biased toward polar residues. The interval Thr-442 to Asp-469 is disordered. Residues Gly-460 to Asp-469 are compositionally biased toward basic and acidic residues. Phosphoserine is present on Ser-475. Positions Gly-484–Ser-505 are disordered. The span at Leu-488–Ser-505 shows a compositional bias: polar residues. Residues Met-616–Leu-868 are chaperonin-like domain. 4 disordered regions span residues Gly-895–Thr-928, Ala-989–Thr-1022, His-1171–Gly-1194, and Phe-1511–Glu-1555. Over residues Ser-902–Pro-912 the composition is skewed to polar residues. Residues Ala-1175–Gly-1184 are compositionally biased toward polar residues. The span at Asn-1185 to Gly-1194 shows a compositional bias: basic and acidic residues. Ser-1543 and Ser-1548 each carry phosphoserine. Ser-1668 carries the phosphoserine; by autocatalysis modification. The tract at residues Glu-1697–Met-1742 is disordered. Ser-1753 is subject to Phosphoserine. The 327-residue stretch at Ser-1757–Phe-2083 folds into the PIPK domain. The segment at Gly-1781 to Lys-1800 is disordered. The catalytic stretch occupies residues Glu-1841–Cys-2097. Residues Ser-1968 and Ser-2052 each carry the phosphoserine; by autocatalysis modification.

As to quaternary structure, component of the PI(3,5)P2 regulatory complex/PAS complex, at least composed of PIKFYVE, FIG4 and VAC14. VAC14 nucleates the assembly of the complex and serves as a scaffold by pentamerizing into a star-shaped structure, which can bind a single copy each of PIKFYVE and FIG4 and coordinates their activities. Interacts (via chaperonin-like domain) with RABEPK; the interaction recruits RABEPK to the endosomal membrane. Interacts with SPAG9. Interacts with EGFR. Mn(2+) is required as a cofactor. Post-translationally, phosphorylated in response to insulin at Ser-318 in a protein kinase B (PKB)-dependent manner. Autophosphorylates which down-regulates lipid product formation. Autophosphorylates which inhibits its own phosphatidylinositol 3-phosphate 5-kinase activity, stimulates FIG4 lipid phosphatase activity and down-regulates lipid product formation. Dephosphorylated by FIG4 in the PI(3,5)P2 regulatory complex, at Ser-48, Ser-1668 and Ser-2052. Phosphorylated in response to insulin at Ser-318 in a protein kinase B (PKB)-dependent manner. Ubiquitous.

The protein resides in the endosome membrane. The protein localises to the early endosome membrane. It is found in the cytoplasmic vesicle. It localises to the phagosome membrane. Its subcellular location is the late endosome membrane. It carries out the reaction a 1,2-diacyl-sn-glycero-3-phospho-(1D-myo-inositol-3-phosphate) + ATP = a 1,2-diacyl-sn-glycero-3-phospho-(1D-myo-inositol-3,5-bisphosphate) + ADP + H(+). It catalyses the reaction a 1,2-diacyl-sn-glycero-3-phospho-(1D-myo-inositol) + ATP = a 1,2-diacyl-sn-glycero-3-phospho-(1D-myo-inositol-5-phosphate) + ADP + H(+). The catalysed reaction is L-seryl-[protein] + ATP = O-phospho-L-seryl-[protein] + ADP + H(+). Inhibited by apilimod and YM201636. Its function is as follows. Dual specificity kinase implicated in myriad essential cellular processes such as maintenance of endomembrane homeostasis, and endocytic-vacuolar pathway, lysosomal trafficking, nuclear transport, stress- or hormone-induced signaling and cell cycle progression. The PI(3,5)P2 regulatory complex regulates both the synthesis and turnover of phosphatidylinositol 3,5-bisphosphate (PtdIns(3,5)P2). Sole enzyme to catalyze the phosphorylation of phosphatidylinositol 3-phosphate on the fifth hydroxyl of the myo-inositol ring, to form (PtdIns(3,5)P2). Also catalyzes the phosphorylation of phosphatidylinositol on the fifth hydroxyl of the myo-inositol ring, to form phosphatidylinositol 5-phosphate (PtdIns(5)P). Has serine-protein kinase activity and is able to autophosphorylate and transphosphorylate. Autophosphorylation inhibits its own phosphatidylinositol 3-phosphate 5-kinase activity, stimulates FIG4 lipid phosphatase activity and down-regulates lipid product formation. Involved in key endosome operations such as fission and fusion in the course of endosomal cargo transport. Required for the maturation of early into late endosomes, phagosomes and lysosomes. Regulates vacuole maturation and nutrient recovery following engulfment of macromolecules, initiates the redistribution of accumulated lysosomal contents back into the endosome network. Critical regulator of the morphology, degradative activity, and protein turnover of the endolysosomal system in macrophages and platelets. In neutrophils, critical to perform chemotaxis, generate ROS, and undertake phagosome fusion with lysosomes. Plays a key role in the processing and presentation of antigens by major histocompatibility complex class II (MHC class II) mediated by CTSS. Regulates melanosome biogenesis by controlling the delivery of proteins from the endosomal compartment to the melanosome. Essential for systemic glucose homeostasis, mediates insulin-induced signals for endosome/actin remodeling in the course of GLUT4 translocation/glucose uptake activation. Supports microtubule-based endosome-to-trans-Golgi network cargo transport, trhough association with SPAG9 and RABEPK. Mediates EGFR trafficking to the nucleus. The protein is 1-phosphatidylinositol 3-phosphate 5-kinase of Mus musculus (Mouse).